We begin with the raw amino-acid sequence, 212 residues long: Large ribosomal subunit protein uL3 (212 aa).

The interval 131–155 (RGNMTHGSKNHRLPGSTGAGTTPGR) is disordered.

It belongs to the universal ribosomal protein uL3 family. Part of the 50S ribosomal subunit. Forms a cluster with proteins L14 and L19.

Its function is as follows. One of the primary rRNA binding proteins, it binds directly near the 3'-end of the 23S rRNA, where it nucleates assembly of the 50S subunit. In Microcystis aeruginosa (strain NIES-843 / IAM M-2473), this protein is Large ribosomal subunit protein uL3.